Here is a 1184-residue protein sequence, read N- to C-terminus: Probable phospholipid-transporting ATPase 12 (1184 aa).

Residues 1–75 (MATVSGRRRK…TTKYTLATFL (75 aa)) lie on the Cytoplasmic side of the membrane. A helical membrane pass occupies residues 76–97 (PKSLFEQFRRVANFYFLVVGIL). At 98 to 101 (SFTP) the chain is on the extracellular side. A helical transmembrane segment spans residues 102 to 124 (LAPYTAVSAIVPLTFVILATMFK). Residues 125 to 306 (EGVEDWRRKQ…SMIERKMDKI (182 aa)) lie on the Cytoplasmic side of the membrane. Residues 307-328 (IYLMFLMVFSLAFFGSVLFGIW) traverse the membrane as a helical segment. Residues 329 to 364 (TRDDFQNGVMERWYLKPDDSSIFFDPKRAPMAAIYH) are Extracellular-facing. The chain crosses the membrane as a helical span at residues 365–382 (FLTALMLNSYFIPISLYV). Residues 383–921 (SIEIVKVLQS…HGHWCYRRIS (539 aa)) are Cytoplasmic-facing. D430 serves as the catalytic 4-aspartylphosphate intermediate. Positions 866 and 870 each coordinate Mg(2+). The helical transmembrane segment at 922 to 941 (KMICYFFYKNITFGFTLFLY) threads the bilayer. Over 942 to 955 (EAYTSFSATPAYND) the chain is Extracellular. Residues 956–975 (WYLSLYSVFFTSLPVICLGI) form a helical membrane-spanning segment. Topologically, residues 976 to 1005 (FDQDVSAPFCLKFPVLYQEGVQNLLFSWRR) are cytoplasmic. A helical membrane pass occupies residues 1006–1028 (ILSWMFHGFCSAIIIFFLCKTSL). Topologically, residues 1029 to 1041 (ESQAFNHEGKTAG) are extracellular. A helical membrane pass occupies residues 1042-1064 (RDILGGTMYTCVVWVVSLQMVLT). Residues 1065–1070 (ISYFTL) lie on the Cytoplasmic side of the membrane. The helical transmembrane segment at 1071-1091 (IQHVVVWGSVVIWYLFLMVYG) threads the bilayer. The Extracellular portion of the chain corresponds to 1092-1108 (SLPIRMSTDAYMVFLEA). A helical transmembrane segment spans residues 1109–1133 (LAPAPSYWITTLFVVLSTMMPYFIF). The Cytoplasmic segment spans residues 1134-1184 (SAIQMRFFPMSHGTVQLLRYEDQCSNSGNFEMGRQGSVRPTLVMRSHQPES).

The protein belongs to the cation transport ATPase (P-type) (TC 3.A.3) family. Type IV subfamily.

Its subcellular location is the membrane. It catalyses the reaction ATP + H2O + phospholipidSide 1 = ADP + phosphate + phospholipidSide 2.. In terms of biological role, involved in transport of phospholipids. This Arabidopsis thaliana (Mouse-ear cress) protein is Probable phospholipid-transporting ATPase 12.